A 363-amino-acid chain; its full sequence is UDP-N-acetylenolpyruvoylglucosamine reductase (363 aa).

The FAD-binding PCMH-type domain maps to 25-201; that stretch reads IGPVARRMLT…RSAPVRYREL (177 aa). Arg168 is an active-site residue. Ser249 functions as the Proton donor in the catalytic mechanism. Glu352 is a catalytic residue.

It belongs to the MurB family. FAD is required as a cofactor.

The protein resides in the cytoplasm. It carries out the reaction UDP-N-acetyl-alpha-D-muramate + NADP(+) = UDP-N-acetyl-3-O-(1-carboxyvinyl)-alpha-D-glucosamine + NADPH + H(+). It participates in cell wall biogenesis; peptidoglycan biosynthesis. Its function is as follows. Cell wall formation. The protein is UDP-N-acetylenolpyruvoylglucosamine reductase of Mycolicibacterium smegmatis (strain ATCC 700084 / mc(2)155) (Mycobacterium smegmatis).